We begin with the raw amino-acid sequence, 199 residues long: Holliday junction branch migration complex subunit RuvA (199 aa).

Residues 1–65 are domain I; it reads MIGWLHGQII…EDALLLYGFL (65 aa). Residues 66 to 144 are domain II; sequence DKEERSLFRS…QFDGSVSDTF (79 aa). The flexible linker stretch occupies residues 144–148; it reads FQKQA. Positions 149–199 are domain III; it reads GSTHSQQEAISALEALGYKPQEAWKVVNKIDNGNKSCEQLIREALQILSSR.

Belongs to the RuvA family. In terms of assembly, homotetramer. Forms an RuvA(8)-RuvB(12)-Holliday junction (HJ) complex. HJ DNA is sandwiched between 2 RuvA tetramers; dsDNA enters through RuvA and exits via RuvB. An RuvB hexamer assembles on each DNA strand where it exits the tetramer. Each RuvB hexamer is contacted by two RuvA subunits (via domain III) on 2 adjacent RuvB subunits; this complex drives branch migration. In the full resolvosome a probable DNA-RuvA(4)-RuvB(12)-RuvC(2) complex forms which resolves the HJ.

Its subcellular location is the cytoplasm. The RuvA-RuvB-RuvC complex processes Holliday junction (HJ) DNA during genetic recombination and DNA repair, while the RuvA-RuvB complex plays an important role in the rescue of blocked DNA replication forks via replication fork reversal (RFR). RuvA specifically binds to HJ cruciform DNA, conferring on it an open structure. The RuvB hexamer acts as an ATP-dependent pump, pulling dsDNA into and through the RuvAB complex. HJ branch migration allows RuvC to scan DNA until it finds its consensus sequence, where it cleaves and resolves the cruciform DNA. The chain is Holliday junction branch migration complex subunit RuvA from Legionella pneumophila (strain Paris).